The primary structure comprises 269 residues: Bis(5'-nucleosyl)-tetraphosphatase, symmetrical (269 aa).

This sequence belongs to the Ap4A hydrolase family.

The enzyme catalyses P(1),P(4)-bis(5'-adenosyl) tetraphosphate + H2O = 2 ADP + 2 H(+). Its function is as follows. Hydrolyzes diadenosine 5',5'''-P1,P4-tetraphosphate to yield ADP. This is Bis(5'-nucleosyl)-tetraphosphatase, symmetrical from Vibrio vulnificus (strain CMCP6).